The sequence spans 528 residues: Importin subunit alpha-2 (528 aa).

Residues Met1–Pro15 are compositionally biased toward low complexity. The segment at Met1–Arg36 is disordered. ARM repeat units follow at residues Val125 to Ala165, Glu167 to Gly206, Ala209 to Lys248, Lys253 to Ala292, Ser294 to Ala335, Asp338 to Ala383, Phe386 to Val425, and Val438 to Arg477.

It belongs to the importin alpha family. As to quaternary structure, forms a complex with importin subunit beta-1. The whole complex, most stable and composed of importin alpha, importin beta and NLS substrate, is referred to as PTAC or pore targeting complex. Expressed in root, callus, and etiolated leaf. Low expression in green leaf.

The protein localises to the cytoplasm. It localises to the perinuclear region. Binds specifically and directly to substrates containing either a simple or bipartite NLS motif. Promotes docking of import substrates to the nuclear envelope. This is Importin subunit alpha-2 from Oryza sativa subsp. japonica (Rice).